The primary structure comprises 1007 residues: Serine/threonine-protein kinase PRP4 homolog (1007 aa).

The interval 1-102 (MAATEPPSLR…LSPAKRTKLD (102 aa)) is disordered. Position 2 is an N-acetylalanine (Ala-2). Phosphoserine is present on residues Ser-8, Ser-21, Ser-24, and Ser-33. Composition is skewed to basic residues over residues 40 to 60 (KHSR…KHKH) and 68 to 82 (KKHK…HKRK). Residues 83–92 (EVIEASDKEG) show a composition bias toward basic and acidic residues. Ser-88 and Ser-94 each carry phosphoserine. An N6-acetyllysine; alternate modification is found at Lys-100. A Glycyl lysine isopeptide (Lys-Gly) (interchain with G-Cter in SUMO2); alternate cross-link involves residue Lys-100. Residue Lys-112 forms a Glycyl lysine isopeptide (Lys-Gly) (interchain with G-Cter in SUMO2) linkage. Lys-118 is covalently cross-linked (Glycyl lysine isopeptide (Lys-Gly) (interchain with G-Cter in SUMO2); alternate). A Glycyl lysine isopeptide (Lys-Gly) (interchain with G-Cter in SUMO1); alternate cross-link involves residue Lys-118. Ser-132 bears the Phosphoserine mark. Phosphotyrosine is present on Tyr-141. Disordered regions lie at residues 141 to 535 (YESG…EDEE) and 560 to 583 (NISV…SPDD). Phosphoserine occurs at positions 143, 145, and 167. Positions 158–169 (GNRSSTRSSSTR) are enriched in low complexity. Glycyl lysine isopeptide (Lys-Gly) (interchain with G-Cter in SUMO2) cross-links involve residues Lys-171 and Lys-178. Composition is skewed to basic residues over residues 180–203 (SAKK…RKSK) and 215–231 (RSKS…SKRS). A phosphoserine mark is found at Ser-240, Ser-242, Ser-258, Ser-278, Ser-292, and Ser-294. A compositionally biased stretch (basic and acidic residues) spans 248–271 (RSQEKVGKARSPAEEKMKSEEKGK). The segment covering 294–303 (SPVDLRDKSK) has biased composition (basic and acidic residues). The span at 304–315 (DRRSRSKERKSK) shows a compositional bias: basic residues. Residues 316–325 (RSEIDKEKKP) are compositionally biased toward basic and acidic residues. Ser-328, Ser-354, Ser-356, Ser-366, and Ser-368 each carry phosphoserine. Basic residues predominate over residues 342–367 (PSRRPGRSPKRRSLSPKLRDKSRRSR). Position 385 is a phosphothreonine (Thr-385). A Phosphoserine modification is found at Ser-387. Basic and acidic residues-rich tracts occupy residues 395 to 408 (RSLE…ERRR) and 415 to 429 (RPRD…RSKD). Residues Ser-427, Ser-431, and Ser-437 each carry the phosphoserine modification. Residues 438–497 (PTRRRSRSPIRRRSRSPLRRSRSPRRRSRSPRRRDRSRRSRSRLRRRSRSRGGHRRRSRS) show a composition bias toward basic residues. Phosphoserine occurs at positions 518, 519, 520, 565, 569, 576, 578, and 580. Over residues 518–535 (SSSDDNLEDFDVEEEDEE) the composition is skewed to acidic residues. Low complexity predominate over residues 562–581 (SVPSEPSSPQSSTRSRSPSP). Residues Lys-593 and Lys-659 each participate in a glycyl lysine isopeptide (Lys-Gly) (interchain with G-Cter in SUMO2) cross-link. The 320-residue stretch at 687-1006 (YNVYGYTGQG…ALQHAFIQEK (320 aa)) folds into the Protein kinase domain. ATP is bound by residues 693–701 (TGQGVFSNV) and Lys-717. Lys-717 is modified (N6-acetyllysine). The active-site Proton acceptor is Asp-815. Tyr-849 bears the Phosphotyrosine mark. The residue at position 852 (Ser-852) is a Phosphoserine.

Belongs to the protein kinase superfamily. CMGC Ser/Thr protein kinase family. In terms of assembly, interacts with CLK1 C-terminus. Associates with the U5 snRNP and NCOR1 deacetylase complexes. Identified in the spliceosome C complex. Phosphorylated by CLK1. Autophosphorylated; phosphorylation inhibits interaction with its targets, such as PRPF6 or SMARCA4.

It localises to the nucleus. The protein localises to the chromosome. It is found in the centromere. The protein resides in the kinetochore. The enzyme catalyses L-seryl-[protein] + ATP = O-phospho-L-seryl-[protein] + ADP + H(+). It carries out the reaction L-threonyl-[protein] + ATP = O-phospho-L-threonyl-[protein] + ADP + H(+). Functionally, serine/threonine kinase involved in spliceosomal assembly as well as mitosis and signaling regulation. Connects chromatin mediated regulation of transcription and pre-mRNA splicing. During spliceosomal assembly, interacts with and phosphorylates PRPF6 and PRPF31, components of the U4/U6-U5 tri-small nuclear ribonucleoprotein (snRNP), to facilitate the formation of the spliceosome B complex. Plays a role in regulating transcription and the spindle assembly checkpoint (SAC). Associates with U5 snRNP and NCOR1 deacetylase complexes which may allow a coordination of pre-mRNA splicing with chromatin remodeling events involved in transcriptional regulation. Associates and probably phosphorylates SMARCA4 and NCOR1. Phosphorylates SRSF1. Associates with kinetochores during mitosis and is necessary for recruitment and maintenance of the checkpoint proteins such as MAD1L1 and MAD12L1 at the kinetochores. Phosphorylates and regulates the activity of the transcription factors such as ELK1 and KLF13. Phosphorylates nuclear YAP1 and WWTR1/TAZ which induces nuclear exclusion and regulates Hippo signaling pathway, involved in tissue growth control. The protein is Serine/threonine-protein kinase PRP4 homolog (Prp4k) of Mus musculus (Mouse).